Consider the following 658-residue polypeptide: D-ornithine--citrate ligase (658 aa).

This sequence belongs to the IucA/IucC family.

The catalysed reaction is D-ornithine + citrate + ATP = N(5)-[(S)-citryl]-D-ornithine + AMP + diphosphate + H(+). Its pathway is siderophore biosynthesis. In terms of biological role, involved in the biosynthesis of the siderophore staphyloferrin A. Catalyzes the ATP-dependent condensation of D-ornithine and citrate to form a citryl-D-ornithine intermediate. This chain is D-ornithine--citrate ligase, found in Staphylococcus aureus (strain NCTC 8325 / PS 47).